Here is an 88-residue protein sequence, read N- to C-terminus: Putative membrane protein insertion efficiency factor (88 aa).

The disordered stretch occupies residues 66 to 88 (DFVPPKKDKNADSEHSCKAHHHH). Over residues 69-82 (PPKKDKNADSEHSC) the composition is skewed to basic and acidic residues.

This sequence belongs to the UPF0161 family.

It is found in the cell membrane. Its function is as follows. Could be involved in insertion of integral membrane proteins into the membrane. In Listeria monocytogenes serotype 4a (strain HCC23), this protein is Putative membrane protein insertion efficiency factor.